The following is a 430-amino-acid chain: Serine hydroxymethyltransferase (430 aa).

120–122 (GHI) provides a ligand contact to (6S)-5,6,7,8-tetrahydrofolate. N6-(pyridoxal phosphate)lysine is present on lysine 226.

It belongs to the SHMT family. In terms of assembly, homodimer. It depends on pyridoxal 5'-phosphate as a cofactor.

It is found in the cytoplasm. It participates in amino-acid biosynthesis; glycine biosynthesis; glycine from L-serine: step 1/1. In terms of biological role, catalyzes the reversible interconversion of serine and glycine with a modified folate serving as the one-carbon carrier. Also exhibits a pteridine-independent aldolase activity toward beta-hydroxyamino acids, producing glycine and aldehydes, via a retro-aldol mechanism. The polypeptide is Serine hydroxymethyltransferase (Pyrobaculum aerophilum (strain ATCC 51768 / DSM 7523 / JCM 9630 / CIP 104966 / NBRC 100827 / IM2)).